The sequence spans 178 residues: Peptidyl-prolyl cis-trans isomerase H (178 aa).

Residues 14-177 (FFDISIGDVP…LPVKITECGQ (164 aa)) enclose the PPIase cyclophilin-type domain.

The protein belongs to the cyclophilin-type PPIase family. PPIase H subfamily.

It is found in the nucleus. The catalysed reaction is [protein]-peptidylproline (omega=180) = [protein]-peptidylproline (omega=0). PPIases accelerate the folding of proteins. It catalyzes the cis-trans isomerization of proline imidic peptide bonds in oligopeptides. The chain is Peptidyl-prolyl cis-trans isomerase H (cyp7) from Rhizopus delemar (strain RA 99-880 / ATCC MYA-4621 / FGSC 9543 / NRRL 43880) (Mucormycosis agent).